The chain runs to 395 residues: Probable alcohol dehydrogenase EutG (395 aa).

NAD(+)-binding positions include D57, 116 to 120, 156 to 160, K178, and 197 to 201; these read GSVLD, TTAGT, and LTEGV. Fe cation is bound by residues D212, H216, H281, and H295. H295 and D354 together coordinate NAD(+).

It belongs to the iron-containing alcohol dehydrogenase family. Fe cation is required as a cofactor.

Its subcellular location is the bacterial microcompartment. The enzyme catalyses ethanol + NAD(+) = acetaldehyde + NADH + H(+). It functions in the pathway amine and polyamine degradation; ethanolamine degradation. May act on the acetaldehyde produced from the degradation of ethanolamine, producing ethanol. Active on acetaldehyde and isobutyraldehyde in vitro. In vitro works equally well with NADH or NADPH. This is Probable alcohol dehydrogenase EutG (eutG) from Escherichia coli (strain K12).